Here is a 593-residue protein sequence, read N- to C-terminus: Meiotic recombination protein REC8 homolog (593 aa).

The residue at position 149 (Ser-149) is a Phosphoserine. A Phosphothreonine modification is found at Thr-164. Ser-192 is modified (phosphoserine). Disordered regions lie at residues Gln-247–Glu-282, Glu-317–Arg-344, and Pro-422–Thr-444. The segment covering Asp-255–Glu-265 has biased composition (basic and acidic residues). A compositionally biased stretch (basic and acidic residues) spans Glu-432–Thr-444.

Belongs to the rad21 family. In terms of assembly, interacts (phosphorylated and unphosphorylated form) with SMC3. Interacts with SYCP3. Interacts (phosphorylated and unphosphorylated form) with SMC1B. Does not interact with SMC1A. Interacts with RAD51. Forms a complex with EWSR1, PRDM9, SYCP3 and SYCP1; complex formation is dependent of phosphorylated form of REC8 and requires PRDM9 bound to hotspot DNA; EWSR1 joins PRDM9 with the chromosomal axis through REC8. In terms of processing, phosphorylated.

Its subcellular location is the nucleus. The protein localises to the chromosome. The protein resides in the centromere. Functionally, required during meiosis for separation of sister chromatids and homologous chromosomes. Proteolytic cleavage of REC8 on chromosome arms by separin during anaphase I allows for homologous chromosome separation in meiosis I and cleavage of REC8 on centromeres during anaphase II allows for sister chromatid separation in meiosis II. This chain is Meiotic recombination protein REC8 homolog, found in Rattus norvegicus (Rat).